Consider the following 359-residue polypeptide: Decorin (359 aa).

The first 16 residues, 1–16 (MKATIILLLLAQVSWA), serve as a signal peptide directing secretion. A propeptide spanning residues 17–30 (GPFQQRGLFDFMLE) is cleaved from the precursor. O-linked (Xyl...) (glycosaminoglycan) serine glycosylation is present at Ser34. Cystine bridges form between Cys54-Cys60 and Cys58-Cys67. LRR repeat units lie at residues 73–93 (DKVP…NNKI), 94–117 (TEIK…NNKI), 118–141 (SKVS…KNQL), 142–162 (KELP…ENEI), 163–186 (TKVR…TNPL), 187–212 (KSSG…DTNI), 213–233 (TSIP…GNKI), 234–257 (SRVD…FNSI), 258–281 (SAVD…NNKL), 282–304 (TRVP…NNNI), 305–334 (SVVG…SNPV), and 335–359 (QYWE…GNYK). Asn211 carries N-linked (GlcNAc...) asparagine glycosylation. Residues Asn262 and Asn303 are each glycosylated (N-linked (GlcNAc...) asparagine). Residues Cys313 and Cys346 are joined by a disulfide bond.

The protein belongs to the small leucine-rich proteoglycan (SLRP) family. SLRP class I subfamily. In terms of assembly, binds to type I and type II collagen, fibronectin and TGF-beta. Forms a ternary complex with MFAP2 and ELN. Interacts with DPT. The attached glycosaminoglycan chain can be either chondroitin sulfate or dermatan sulfate depending upon the tissue of origin. Detected in placenta (at protein level). Detected in cerebrospinal fluid, fibroblasts and urine (at protein level).

Its subcellular location is the secreted. The protein resides in the extracellular space. The protein localises to the extracellular matrix. Functionally, may affect the rate of fibrils formation. The polypeptide is Decorin (DCN) (Homo sapiens (Human)).